A 279-amino-acid polypeptide reads, in one-letter code: Non-structural maintenance of chromosomes element 3 homolog (279 aa).

A disordered region spans residues 1 to 52 (MLQKPRGRGRPSTQADPERDWGGAGEEGPSTSRAAGGSSQGSRASLSAPTVG). Residues 30-48 (STSRAAGGSSQGSRASLSA) are compositionally biased toward low complexity. S38 is subject to Phosphoserine. Positions 52–279 (GPRTQKQLEL…ATASAPATSS (228 aa)) are interaction with NSMCE1. Residues 59–259 (LELKVAELVQ…KDWPTQYCEA (201 aa)) enclose the MAGE domain.

In terms of assembly, component of the SMC5-SMC6 complex which consists at least of SMC5, SMC6, NSMCE2, NSMCE1, NSMCE4A or EID3 and NSMCE3. NSMCE1, NSMCE4A or EID3 and NSMCE3 probably form a subcomplex that bridges the head domains of the SMC5:SMC6 heterodimer. Interacts with PJA1. Interacts with E2F1 (via C-terminus). Interacts with NGFR (via C-terminus). Interacts with NSMCE1. Interacts with NSMCE4. Interacts with SMC6. Interacts with EID3. Ubiquitous.

It is found in the cytoplasm. The protein resides in the nucleus. Its subcellular location is the chromosome. The protein localises to the telomere. Component of the SMC5-SMC6 complex, a complex involved in repair of DNA double-strand breaks by homologous recombination. The complex may promote sister chromatid homologous recombination by recruiting the SMC1-SMC3 cohesin complex to double-strand breaks. The complex is required for telomere maintenance via recombination in ALT (alternative lengthening of telomeres) cell lines and mediates sumoylation of shelterin complex (telosome) components which is proposed to lead to shelterin complex disassembly in ALT-associated PML bodies (APBs). In vitro enhances ubiquitin ligase activity of NSMCE1. Proposed to act through recruitment and/or stabilization of the Ubl-conjugating enzyme (E2) at the E3:substrate complex. May be a growth suppressor that facilitates the entry of the cell into cell cycle arrest. The sequence is that of Non-structural maintenance of chromosomes element 3 homolog (Nsmce3) from Mus musculus (Mouse).